Consider the following 608-residue polypeptide: Protein UL27 (608 aa).

Residues 1–13 are compositionally biased toward pro residues; sequence MNPVDQPPPPPLT. The interval 1–33 is disordered; sequence MNPVDQPPPPPLTQQPEEQAKEDHDDGDERLFR. Over residues 18–33 the composition is skewed to basic and acidic residues; sequence EQAKEDHDDGDERLFR.

Belongs to the herpesviridae U4 family. Interacts with host KAT5, PSME3 and EP400.

The protein resides in the host nucleus. The protein localises to the host nucleolus. Its function is as follows. Promotes a cell cycle arrest in G0/G1 by inducing the proteasomal degradation of host histone acetyltransferase KAT5/Tip60. The chain is Protein UL27 (UL27) from Homo sapiens (Human).